The sequence spans 197 residues: Rac-like GTP-binding protein RHO1 (197 aa).

G13–T20 contacts GTP. The Effector region signature appears at Y35–F43. Residues D60 to Q64 and T118 to D121 each bind GTP. C194 is subject to Cysteine methyl ester. C194 carries S-geranylgeranyl cysteine lipidation. Residues S195–L197 constitute a propeptide, removed in mature form.

The protein belongs to the small GTPase superfamily. Rho family.

The protein resides in the cytoplasm. It localises to the membrane. Its function is as follows. Inactive GDP-bound Rho GTPases reside in the cytosol, are found in a complex with Rho GDP-dissociation inhibitors (Rho GDIs), and are released from the GDI protein in order to translocate to membranes upon activation. In Beta vulgaris (Sugar beet), this protein is Rac-like GTP-binding protein RHO1 (RHO1).